The primary structure comprises 1125 residues: Exportin-6 (1125 aa).

Ala-2 carries the N-acetylalanine modification. Residues Ile-31 to Ala-97 form the Importin N-terminal domain. Ser-199 carries the phosphoserine modification. A phosphothreonine mark is found at Thr-201 and Thr-204. Phosphoserine is present on residues Ser-208 and Ser-224.

It belongs to the exportin family. Found in a complex with XPO6, Ran, ACTB and PFN1. Interacts with ACTB. Interacts with ACTB in a RanGTP-dependent manner.

The protein resides in the nucleus. The protein localises to the cytoplasm. Mediates the nuclear export of actin and profilin-actin complexes in somatic cells. This Homo sapiens (Human) protein is Exportin-6 (XPO6).